The following is a 379-amino-acid chain: UDP-4-amino-4-deoxy-L-arabinose--oxoglutarate aminotransferase (379 aa).

Lysine 182 carries the N6-(pyridoxal phosphate)lysine modification.

It belongs to the DegT/DnrJ/EryC1 family. ArnB subfamily. In terms of assembly, homodimer. It depends on pyridoxal 5'-phosphate as a cofactor.

It carries out the reaction UDP-4-amino-4-deoxy-beta-L-arabinose + 2-oxoglutarate = UDP-beta-L-threo-pentopyranos-4-ulose + L-glutamate. It participates in nucleotide-sugar biosynthesis; UDP-4-deoxy-4-formamido-beta-L-arabinose biosynthesis; UDP-4-deoxy-4-formamido-beta-L-arabinose from UDP-alpha-D-glucuronate: step 2/3. It functions in the pathway bacterial outer membrane biogenesis; lipopolysaccharide biosynthesis. Its function is as follows. Catalyzes the conversion of UDP-4-keto-arabinose (UDP-Ara4O) to UDP-4-amino-4-deoxy-L-arabinose (UDP-L-Ara4N). The modified arabinose is attached to lipid A and is required for resistance to polymyxin and cationic antimicrobial peptides. The polypeptide is UDP-4-amino-4-deoxy-L-arabinose--oxoglutarate aminotransferase (Salmonella dublin (strain CT_02021853)).